Here is a 237-residue protein sequence, read N- to C-terminus: Large ribosomal subunit protein uL1 (237 aa).

It belongs to the universal ribosomal protein uL1 family. As to quaternary structure, part of the 50S ribosomal subunit.

Its function is as follows. Binds directly to 23S rRNA. The L1 stalk is quite mobile in the ribosome, and is involved in E site tRNA release. In terms of biological role, protein L1 is also a translational repressor protein, it controls the translation of the L11 operon by binding to its mRNA. The sequence is that of Large ribosomal subunit protein uL1 from Myxococcus xanthus (strain DK1622).